Consider the following 95-residue polypeptide: Large ribosomal subunit protein uL23 (95 aa).

It belongs to the universal ribosomal protein uL23 family. In terms of assembly, part of the 50S ribosomal subunit. Contacts protein L29, and trigger factor when it is bound to the ribosome.

One of the early assembly proteins it binds 23S rRNA. One of the proteins that surrounds the polypeptide exit tunnel on the outside of the ribosome. Forms the main docking site for trigger factor binding to the ribosome. This is Large ribosomal subunit protein uL23 from Geobacillus kaustophilus (strain HTA426).